A 316-amino-acid chain; its full sequence is Acetyl-coenzyme A carboxylase carboxyl transferase subunit alpha (316 aa).

Residues 36–290 enclose the CoA carboxyltransferase C-terminal domain; that stretch reads KLEQKLDSLK…KQFLVEQLHI (255 aa).

It belongs to the AccA family. Acetyl-CoA carboxylase is a heterohexamer composed of biotin carboxyl carrier protein (AccB), biotin carboxylase (AccC) and two subunits each of ACCase subunit alpha (AccA) and ACCase subunit beta (AccD).

It localises to the cytoplasm. The enzyme catalyses N(6)-carboxybiotinyl-L-lysyl-[protein] + acetyl-CoA = N(6)-biotinyl-L-lysyl-[protein] + malonyl-CoA. Its pathway is lipid metabolism; malonyl-CoA biosynthesis; malonyl-CoA from acetyl-CoA: step 1/1. Component of the acetyl coenzyme A carboxylase (ACC) complex. First, biotin carboxylase catalyzes the carboxylation of biotin on its carrier protein (BCCP) and then the CO(2) group is transferred by the carboxyltransferase to acetyl-CoA to form malonyl-CoA. The sequence is that of Acetyl-coenzyme A carboxylase carboxyl transferase subunit alpha from Protochlamydia amoebophila (strain UWE25).